An 872-amino-acid polypeptide reads, in one-letter code: MGSGPIDPKELLKGLDSFLTRDGEVKSVDGIAKIFSLMKEARKMVSRCTYLNIILQTRAPEVLVKFIDVGGYKLLNSWLTYSKTTNNIPLLQQILLTLQHLPLTVDHLKQNNTAKLVKQLSKSSEDEELRKLASVLVSDWMAVIRSQSSTQPAEKDKKKRKEEGKSRTTLPERPLTEVKAETRAEEAPEKKKEKPKSLRTTAPSHAKFRSTGLELDTPSLVPVKKNSSTVVVSDKYNLKPIPLKRQSATAAPGDAAPPAEKKYKPLNTTPNTTKEIKVKIIPPQPMEGLGFLDALNSAPVPGIKIKKKKKVLSPTAAKPSPFEGKTSTEPSTAKPSSPEPAAPAEPMDTDRPGTPVPAVEVPELMDAASSEPGALDAKPVESPGDPNQLTRKGRKRKTVTWPEEGKLREYFYFELDETERVNVNKIKDFGEAAKREILSDRHAFETARRLSHDNMEEKVPWVCPRPLVLPSPLVIPGSNSQERYIQAEREKGILQELFLNKESPHEPDPEPYEPIPPKLIPLDEECAMDETPYVETLEPGGSGGSPDGAGGSKLPPVLANLMGSMGAGKSPQGPGGGGINVQEILTSIMGSPNNHPSEELLKQPDYSDKLKQMLVPHGLLGPGPVANGFPPGGPGGPKGMQHFPPGPGGPMPGPHGGPGGPVGPRLLGPPPPSRGGDPFWDGPGDPMRGGPMRGGPGPGPGPYHRGRGGRGGNEPPPPPPFRGARGGRSGGGPPNGRGGPGGGGMVGGGGHRPHEGPGGSMGSGHRSHEGPGGSMGSGHRSHEGPGHGGPHGHRPHDVPSHRGHDHRGPPPHEHRGHDGHGGGGHRGHDGGHSHGGDMSNRPVCRHFMMKGNCRYENNCAFYHPGVNGPPLP.

Positions 1–348 are interaction with TOX4; sequence MGSGPIDPKE…EPAAPAEPMD (348 aa). In terms of domain architecture, TFIIS N-terminal spans 73 to 147; it reads KLLNSWLTYS…SDWMAVIRSQ (75 aa). Disordered stretches follow at residues 147-213, 247-270, 307-398, and 534-837; these read QSST…STGL, SATAAPGDAAPPAEKKYKPLNTTP, KKKK…KRKT, and VETL…HGGD. 2 stretches are compositionally biased toward basic and acidic residues: residues 153–166 and 174–196; these read AEKDKKKRKEEGKS and PLTEVKAETRAEEAPEKKKEKPK. Residue K179 forms a Glycyl lysine isopeptide (Lys-Gly) (interchain with G-Cter in SUMO2) linkage. The span at 248–258 shows a compositional bias: low complexity; it reads ATAAPGDAAPP. Residue K262 forms a Glycyl lysine isopeptide (Lys-Gly) (interchain with G-Cter in SUMO2) linkage. Phosphoserine is present on S313. Low complexity predominate over residues 325–336; the sequence is KTSTEPSTAKPS. The interval 357–433 is necessary for interaction with PPP1CA; the sequence is PAVEVPELMD…NKIKDFGEAA (77 aa). Phosphoserine is present on S382. Residues 393-408 are necessary for interaction with PPP1CC; it reads GRKRKTVTWPEEGKLR. Residues 394-423 carry the PP1-binding motif motif; it reads RKRKTVTWPEEGKLREYFYFELDETERVNV. The residue at position 398 (T398) is a Phosphothreonine; by PKA. The segment at 418–619 is interaction with WDR82; it reads TERVNVNKIK…LKQMLVPHGL (202 aa). Positions 540–551 are enriched in gly residues; it reads GGSGGSPDGAGG. Phosphoserine occurs at positions 545 and 591. The segment covering 583–595 has biased composition (polar residues); it reads EILTSIMGSPNNH. Over residues 596–611 the composition is skewed to basic and acidic residues; it reads PSEELLKQPDYSDKLK. Residues 644-655 show a composition bias toward pro residues; the sequence is PPGPGGPMPGPH. Position 665 is an omega-N-methylarginine (R665). Residues 674–690 are compositionally biased toward low complexity; that stretch reads RGGDPFWDGPGDPMRGG. R693 and R737 each carry omega-N-methylarginine. The span at 724 to 762 shows a compositional bias: gly residues; that stretch reads ARGGRSGGGPPNGRGGPGGGGMVGGGGHRPHEGPGGSMG. A compositionally biased stretch (basic and acidic residues) spans 795–835; it reads PHDVPSHRGHDHRGPPPHEHRGHDGHGGGGHRGHDGGHSHG. Residues 838 to 866 form a C3H1-type zinc finger; that stretch reads MSNRPVCRHFMMKGNCRYENNCAFYHPGV.

As to quaternary structure, component of the PNUTS-PP1 complex (also named PTW/PP1 complex), composed of PPP1R10/PNUTS, TOX4, WDR82, and PPP1CA (or PPP1CB or PPP1CC). In terms of processing, phosphorylated on Thr-398 by PKA within the region necessary for interaction with PPP1CA. Expressed in testis, brain and intestine (at protein level). Highly expressed in testis.

It is found in the nucleus. It localises to the chromosome. Its function is as follows. Substrate-recognition component of the PNUTS-PP1 protein phosphatase complex, a protein phosphatase 1 (PP1) complex that promotes RNA polymerase II transcription pause-release, allowing transcription elongation. Promoter-proximal pausing by RNA polymerase II is a transcription halt following transcription initiation but prior to elongation, which acts as a checkpoint to control that transcripts are favorably configured for transcriptional elongation. The PNUTS-PP1 complex mediates the release of RNA polymerase II from promoter-proximal region of genes by catalyzing dephosphorylation of proteins involved in transcription, such as AFF4, CDK9, MEPCE, INTS12, NCBP1, POLR2M/GDOWN1 and SUPT6H. The PNUTS-PP1 complex also regulates RNA polymerase II transcription termination by mediating dephosphorylation of SUPT5H in termination zones downstream of poly(A) sites, thereby promoting deceleration of RNA polymerase II transcription. PNUTS-PP1 complex is also involved in the response to replication stress by mediating dephosphorylation of POLR2A at 'Ser-5' of the CTD, promoting RNA polymerase II degradation. The PNUTS-PP1 complex also plays a role in the control of chromatin structure and cell cycle progression during the transition from mitosis into interphase. PNUTS-PP1 complex mediates dephosphorylation of MYC, promoting MYC stability by preventing MYC ubiquitination by the SCF(FBXW7) complex. In addition to acts as a substrate-recognition component, PPP1R10/PNUTS also acts as a nuclear targeting subunit for the PNUTS-PP1 complex. In some context, PPP1R10/PNUTS also acts as an inhibitor of protein phosphatase 1 (PP1) activity by preventing access to substrates. The sequence is that of Serine/threonine-protein phosphatase 1 regulatory subunit 10 from Rattus norvegicus (Rat).